The chain runs to 221 residues: Uracil-DNA glycosylase 1 (221 aa).

Residue aspartate 61 is the Proton acceptor of the active site.

It belongs to the uracil-DNA glycosylase (UDG) superfamily. UNG family.

Its subcellular location is the cytoplasm. It catalyses the reaction Hydrolyzes single-stranded DNA or mismatched double-stranded DNA and polynucleotides, releasing free uracil.. Excises uracil residues from the DNA which can arise as a result of misincorporation of dUMP residues by DNA polymerase or due to deamination of cytosine. The protein is Uracil-DNA glycosylase 1 of Listeria monocytogenes serotype 4b (strain F2365).